Reading from the N-terminus, the 224-residue chain is Germin-like protein 1-2 (224 aa).

The N-terminal stretch at 1–29 is a signal peptide; that stretch reads MASSRSVVLRVLVAVAVVAAAGAPRLAVA. Cys38 and Cys53 form a disulfide bridge. Residues 67 to 215 form the Cupin type-1 domain; the sequence is DAIVQAPSTS…TFLMGEDEVG (149 aa). Asn82 carries N-linked (GlcNAc...) asparagine glycosylation. Mn(2+) is bound by residues His115, His117, Glu122, and His161. N-linked (GlcNAc...) asparagine glycosylation occurs at Asn170.

It belongs to the germin family. Oligomer (believed to be a pentamer but probably hexamer).

Its subcellular location is the secreted. The protein localises to the extracellular space. It is found in the apoplast. Its function is as follows. May play a role in plant defense. Probably has no oxalate oxidase activity even if the active site is conserved. This Oryza sativa subsp. japonica (Rice) protein is Germin-like protein 1-2.